The following is a 95-amino-acid chain: Toxin HigB-1 (95 aa).

Functionally, toxic component of a type II toxin-antitoxin (TA) system. Inhibits translation by cleavage of mRNA. This is Toxin HigB-1 (higB-1) from Vibrio cholerae serotype O1 (strain ATCC 39315 / El Tor Inaba N16961).